A 418-amino-acid polypeptide reads, in one-letter code: N-acetylglucosamine-6-phosphate deacetylase (418 aa).

Position 154 (E154) interacts with a divalent metal cation. 165 to 166 (CH) contributes to the substrate binding site. A divalent metal cation-binding residues include H223 and H244. Substrate is bound by residues 247–248 (NA), R255, and 281–284 (DGIH). The active-site Proton donor/acceptor is the D306. A substrate-binding site is contributed by 340–342 (TAG).

The protein belongs to the metallo-dependent hydrolases superfamily. NagA family. A divalent metal cation is required as a cofactor.

It catalyses the reaction N-acetyl-D-glucosamine 6-phosphate + H2O = D-glucosamine 6-phosphate + acetate. The chain is N-acetylglucosamine-6-phosphate deacetylase from Caenorhabditis elegans.